Consider the following 204-residue polypeptide: ATP-dependent Clp protease proteolytic subunit (204 aa).

Ser-100 serves as the catalytic Nucleophile. His-125 is an active-site residue.

Belongs to the peptidase S14 family. In terms of assembly, fourteen ClpP subunits assemble into 2 heptameric rings which stack back to back to give a disk-like structure with a central cavity, resembling the structure of eukaryotic proteasomes.

It is found in the cytoplasm. It catalyses the reaction Hydrolysis of proteins to small peptides in the presence of ATP and magnesium. alpha-casein is the usual test substrate. In the absence of ATP, only oligopeptides shorter than five residues are hydrolyzed (such as succinyl-Leu-Tyr-|-NHMec, and Leu-Tyr-Leu-|-Tyr-Trp, in which cleavage of the -Tyr-|-Leu- and -Tyr-|-Trp bonds also occurs).. Functionally, cleaves peptides in various proteins in a process that requires ATP hydrolysis. Has a chymotrypsin-like activity. Plays a major role in the degradation of misfolded proteins. This Anaeromyxobacter sp. (strain Fw109-5) protein is ATP-dependent Clp protease proteolytic subunit.